The sequence spans 104 residues: Nucleoid-associated protein jk2011 (104 aa).

The protein belongs to the YbaB/EbfC family. As to quaternary structure, homodimer.

Its subcellular location is the cytoplasm. It is found in the nucleoid. Functionally, binds to DNA and alters its conformation. May be involved in regulation of gene expression, nucleoid organization and DNA protection. The protein is Nucleoid-associated protein jk2011 of Corynebacterium jeikeium (strain K411).